The following is a 31-amino-acid chain: Glucagon-5 (31 aa).

This sequence belongs to the glucagon family.

It is found in the secreted. Its function is as follows. Glucagon plays a key role in glucose metabolism and homeostasis. Regulates blood glucose by increasing gluconeogenesis and decreasing glycolysis. In Huso dauricus (Kaluga sturgeon), this protein is Glucagon-5.